The following is a 287-amino-acid chain: Transcription initiation factor IIB 1 (287 aa).

Residues His-3–Thr-31 form a TFIIB-type zinc finger. Cys-7, Cys-10, Cys-23, and Cys-26 together coordinate Zn(2+). Positions Glu-40–Glu-53 are enriched in basic and acidic residues. The segment at Glu-40–Arg-63 is disordered. 2 consecutive repeat copies span residues Thr-111–Leu-194 and Glu-205–Asp-286.

It belongs to the TFIIB family.

Its function is as follows. Stabilizes TBP binding to an archaeal box-A promoter. Also responsible for recruiting RNA polymerase II to the pre-initiation complex (DNA-TBP-TFIIB). This is Transcription initiation factor IIB 1 from Halobacterium salinarum (strain ATCC 700922 / JCM 11081 / NRC-1) (Halobacterium halobium).